The chain runs to 103 residues: Large ribosomal subunit protein bL21 (103 aa).

It belongs to the bacterial ribosomal protein bL21 family. Part of the 50S ribosomal subunit. Contacts protein L20.

This protein binds to 23S rRNA in the presence of protein L20. This Caldicellulosiruptor saccharolyticus (strain ATCC 43494 / DSM 8903 / Tp8T 6331) protein is Large ribosomal subunit protein bL21.